The sequence spans 302 residues: Rhomboid-related protein 2 (302 aa).

Residues 1 to 38 are disordered; it reads MAVAHEMEMESVNLNMEREGKEEPEEEKMKGNGEGKDF. The span at 16 to 38 shows a compositional bias: basic and acidic residues; it reads MEREGKEEPEEEKMKGNGEGKDF. Transmembrane regions (helical) follow at residues 71 to 91, 127 to 147, 158 to 178, 182 to 202, 211 to 231, 244 to 264, and 277 to 297; these read PLFIILISLAELAVFIYYAVW, LVHAGVQHIVGNLLMQIVLGI, VGLVYLAGVLAGSLASSIFDP, LVGASGGVYALMGGYFMNVIV, FGIVRLLVIILIVASDMGFAL, VSFAAHIAGGFAGMSIGYTVF, and FWIAIAAYVACLLFAVFFNIF. Ser-186 acts as the Nucleophile in catalysis. The active site involves His-249.

This sequence belongs to the peptidase S54 family. In terms of processing, proteolytic processing of the proenzyme produces an N- and a C-terminal fragment. The processing is required for activation of the protease.

It is found in the cell membrane. It catalyses the reaction Cleaves type-1 transmembrane domains using a catalytic dyad composed of serine and histidine that are contributed by different transmembrane domains.. Functionally, involved in regulated intramembrane proteolysis and the subsequent release of functional polypeptides from their membrane anchors. Known substrate: EFNB3. The chain is Rhomboid-related protein 2 (Rhbdl2) from Mus musculus (Mouse).